Here is a 93-residue protein sequence, read N- to C-terminus: Head virion protein G6P (93 aa).

The next 2 membrane-spanning stretches (helical) occupy residues 25-45 and 56-76; these read GVGIFTYVGLTALVDGFLNLL and ILDILAIAGVPEALSIVGSAL.

The protein belongs to the inovirus G6P protein family. In terms of assembly, interacts with G3P; this interaction is required for proper integration of G3P and G6P into the virion.

It localises to the virion. The protein resides in the host membrane. In terms of biological role, plays essential roles both in the entry of the viral genome into the bacterial host and in budding process. The formation of the G3P-G6P complex termed adsorption complex is essential for correct termination of filamentous phage assembly. This is Head virion protein G6P (VI) from Pseudomonas phage Pf3 (Bacteriophage Pf3).